The sequence spans 440 residues: MESQQLSQHSPISHGSACASVTSKEVHTNQDPLDVSASKTEECEKASTKANSQQTTTPASSAVPENPHHASPQTAQSHSPQNGPYPQQCMMTQNQANPSGWSFYGHPSMIPYTPYQMSPMYFPPGPQSQFPQYPSSVGTPLSTPSPESGNTFTDSSSADSDMTSTKKYVRPPPMLTSPNDFPNWVKTYIKFLQNSNLGGIIPTVNGKPVRQITDDELTFLYNTFQIFAPSQFLPTWVKDILSVDYTDIMKILSKSIEKMQSDTQEANDIVTLANLQYNGSTPADAFETKVTNIIDRLNNNGIHINNKVACQLIMRGLSGEYKFLRYTRHRHLNMTVAELFLDIHAIYEEQQGSRNSKPNYRRNPSDEKNDSRSYTNTTKPKVIARNPQKTNNSKSKTARAHNVSTSNNSPSTDNDSISKSTTEPIQLNNKHDLHLRPETY.

Composition is skewed to polar residues over residues 1–23 (MESQ…SVTS), 48–60 (TKAN…TPAS), 71–93 (SPQT…MMTQ), and 127–152 (QSQF…GNTF). 3 disordered regions span residues 1-93 (MESQ…MMTQ), 126-173 (PQSQ…RPPP), and 352-440 (GSRN…PETY). A compositionally biased stretch (low complexity) spans 153-165 (TDSSSADSDMTST). Positions 299–401 (NNGIHINNKV…NSKSKTARAH (103 aa)) are RNA-binding. Residues 402 to 418 (NVSTSNNSPSTDNDSIS) are compositionally biased toward low complexity. Residue S416 is modified to Phosphoserine. Residues 419-428 (KSTTEPIQLN) are compositionally biased toward polar residues. A compositionally biased stretch (basic and acidic residues) spans 429-440 (NKHDLHLRPETY).

Homotrimer.

Its subcellular location is the cytoplasm. In terms of biological role, capsid protein (CA) is the structural component of the virus-like particle (VLP), forming the shell that encapsulates the retrotransposons dimeric RNA genome. The particles are assembled from trimer-clustered units and there are holes in the capsid shells that allow for the diffusion of macromolecules. CA also has nucleocapsid-like chaperone activity, promoting primer tRNA(i)-Met annealing to the multipartite primer-binding site (PBS), dimerization of Ty1 RNA and initiation of reverse transcription. In Saccharomyces cerevisiae (strain ATCC 204508 / S288c) (Baker's yeast), this protein is Transposon Ty1-A Gag polyprotein (TY1A-A).